We begin with the raw amino-acid sequence, 159 residues long: Small ribosomal subunit protein uS4 (159 aa).

In terms of domain architecture, S4 RNA-binding spans 106–158 (RRLQTIVYRMGLAKSIHHARQLIVHGHVAVAGRRVTSPGFLVPRELEDKISLI).

It belongs to the universal ribosomal protein uS4 family. As to quaternary structure, part of the 30S ribosomal subunit. Contacts protein S5. The interaction surface between S4 and S5 is involved in control of translational fidelity.

Its function is as follows. One of the primary rRNA binding proteins, it binds directly to 16S rRNA where it nucleates assembly of the body of the 30S subunit. Functionally, with S5 and S12 plays an important role in translational accuracy. This Pyrobaculum aerophilum (strain ATCC 51768 / DSM 7523 / JCM 9630 / CIP 104966 / NBRC 100827 / IM2) protein is Small ribosomal subunit protein uS4.